Reading from the N-terminus, the 397-residue chain is Aspartate/prephenate aminotransferase (397 aa).

L-aspartate-binding residues include glycine 38, tryptophan 124, and asparagine 174. N6-(pyridoxal phosphate)lysine is present on lysine 238. Arginine 375 is a binding site for L-aspartate.

It belongs to the class-I pyridoxal-phosphate-dependent aminotransferase family. Homodimer. Requires pyridoxal 5'-phosphate as cofactor.

The protein resides in the cytoplasm. It carries out the reaction L-aspartate + 2-oxoglutarate = oxaloacetate + L-glutamate. It catalyses the reaction L-arogenate + 2-oxoglutarate = prephenate + L-glutamate. Functionally, catalyzes the reversible conversion of aspartate and 2-oxoglutarate to glutamate and oxaloacetate. Can also transaminate prephenate in the presence of glutamate, with lower efficiency. This is Aspartate/prephenate aminotransferase from Nitrosomonas europaea (strain ATCC 19718 / CIP 103999 / KCTC 2705 / NBRC 14298).